A 402-amino-acid chain; its full sequence is Acetate kinase (402 aa).

N7 serves as a coordination point for Mg(2+). K14 provides a ligand contact to ATP. R95 contributes to the substrate binding site. D152 functions as the Proton donor/acceptor in the catalytic mechanism. ATP is bound by residues 212-216, 286-288, and 334-338; these read HLGNG, DMR, and GIGEN. A Mg(2+)-binding site is contributed by E388.

Belongs to the acetokinase family. As to quaternary structure, homodimer. Mg(2+) serves as cofactor. Requires Mn(2+) as cofactor.

It localises to the cytoplasm. It catalyses the reaction acetate + ATP = acetyl phosphate + ADP. It functions in the pathway metabolic intermediate biosynthesis; acetyl-CoA biosynthesis; acetyl-CoA from acetate: step 1/2. In terms of biological role, catalyzes the formation of acetyl phosphate from acetate and ATP. Can also catalyze the reverse reaction. The polypeptide is Acetate kinase (Oleidesulfovibrio alaskensis (strain ATCC BAA-1058 / DSM 17464 / G20) (Desulfovibrio alaskensis)).